Here is a 165-residue protein sequence, read N- to C-terminus: Large ribosomal subunit protein uL10 (165 aa).

The protein belongs to the universal ribosomal protein uL10 family. Part of the ribosomal stalk of the 50S ribosomal subunit. The N-terminus interacts with L11 and the large rRNA to form the base of the stalk. The C-terminus forms an elongated spine to which L12 dimers bind in a sequential fashion forming a multimeric L10(L12)X complex.

Functionally, forms part of the ribosomal stalk, playing a central role in the interaction of the ribosome with GTP-bound translation factors. The protein is Large ribosomal subunit protein uL10 of Buchnera aphidicola subsp. Acyrthosiphon pisum (strain 5A).